Consider the following 345-residue polypeptide: Opioid-binding protein/cell adhesion molecule (345 aa).

A signal peptide spans 1 to 27 (MGVCGYLFLPWKCLVVVSLRLLFLVPT). Ig-like C2-type domains lie at 39–126 (PKAM…PKTS), 136–219 (PQIM…VKIT), and 223–310 (PPYI…ASIT). Asparagine 44, asparagine 70, and asparagine 140 each carry an N-linked (GlcNAc...) asparagine glycan. An intrachain disulfide couples cysteine 57 to cysteine 115. 2 disulfides stabilise this stretch: cysteine 157–cysteine 202 and cysteine 244–cysteine 296. N-linked (GlcNAc...) asparagine glycosylation is found at asparagine 285, asparagine 293, and asparagine 306. Asparagine 322 carries GPI-anchor amidated asparagine lipidation. Positions 323 to 345 (SASRALACLWLSGTLLAHFFIKF) are cleaved as a propeptide — removed in mature form.

The protein belongs to the immunoglobulin superfamily. IgLON family.

The protein resides in the cell membrane. Its function is as follows. Binds opioids in the presence of acidic lipids; probably involved in cell contact. This is Opioid-binding protein/cell adhesion molecule (OPCML) from Homo sapiens (Human).